We begin with the raw amino-acid sequence, 187 residues long: Elongation factor P (187 aa).

Belongs to the elongation factor P family.

It is found in the cytoplasm. Its pathway is protein biosynthesis; polypeptide chain elongation. In terms of biological role, involved in peptide bond synthesis. Stimulates efficient translation and peptide-bond synthesis on native or reconstituted 70S ribosomes in vitro. Probably functions indirectly by altering the affinity of the ribosome for aminoacyl-tRNA, thus increasing their reactivity as acceptors for peptidyl transferase. In Tolumonas auensis (strain DSM 9187 / NBRC 110442 / TA 4), this protein is Elongation factor P.